A 582-amino-acid chain; its full sequence is MKSIILFVLSLLLILEKQAAVMGQKGGSKGQLSSGSSRFPHRHRSQHYSGQKDKQHTESKGSFSIQHTYHVDANDHDRTRKSQQYYLNAQHKTTKSKQHLRRHQRLLNYKQKGRGRVKPKRHFHLIVIHRKGGQVHHGTQNPSQDQGNSPSGKGISSQYSNTEERLRVRGLSKEQASASGAQKGRTQGGSQTNYVLQTEELVANKQQRETQNSHRNKGHYQNVVDVRXEHSSKLQTSLRPAHQHKLQHGYKDIFTTQDELLVYNKNQHQTKNLNQDQEHGRKAHKGSYQSSSTEERQPNHEEKSVQKGVPKGSISIQTEEKIYGKSQNQVTIPSQDQEHGHKENKISYQSSSAEERRLNSGEKGIQKGVSKGSISIQTEEKIHGKSQNQVAIPSQDQEHGHKENKISYQSSSAEERQLNSGEKGIQKGVSKGSISIQTEEKIYGKSQNQVTIPSQDQEHGHKENKIAYQSSSTEERQLNYGGKSIQKDVSQSSLSFQTEKLVEGKSQIQTPNPNQGQWSGQNAKGNSGKSADRKQDLLSHEQEGRYQQEFSGAHNTVNIEHKVAYDDLLTQQYNEDRNPIST.

The first 23 residues, 1-23 (MKSIILFVLSLLLILEKQAAVMG), serve as a signal peptide directing secretion. 3 disordered regions span residues 25–62 (KGGS…SKGS), 91–190 (HKTT…QGGS), and 272–553 (NLNQ…FSGA). Over residues 50 to 59 (GQKDKQHTES) the composition is skewed to basic and acidic residues. Residues 92 to 134 (KTTKSKQHLRRHQRLLNYKQKGRGRVKPKRHFHLIVIHRKGGQ) are compositionally biased toward basic residues. 2 stretches are compositionally biased toward polar residues: residues 137 to 161 (HGTQ…QYSN) and 174 to 190 (EQAS…QGGS). Over residues 293 to 305 (TEERQPNHEEKSV) the composition is skewed to basic and acidic residues. Polar residues predominate over residues 325–335 (KSQNQVTIPSQ). Over residues 336-345 (DQEHGHKENK) the composition is skewed to basic and acidic residues. A compositionally biased stretch (polar residues) spans 385–395 (KSQNQVAIPSQ). The span at 396–405 (DQEHGHKENK) shows a compositional bias: basic and acidic residues. Over residues 445–455 (KSQNQVTIPSQ) the composition is skewed to polar residues. Over residues 456 to 465 (DQEHGHKENK) the composition is skewed to basic and acidic residues. Polar residues-rich tracts occupy residues 487-498 (KDVSQSSLSFQT) and 506-529 (SQIQ…NSGK). The span at 530–546 (SADRKQDLLSHEQEGRY) shows a compositional bias: basic and acidic residues.

Belongs to the semenogelin family. As to quaternary structure, interacts with SERPINA5.

The protein resides in the secreted. Its function is as follows. Participates in the formation of a gel matrix (sperm coagulum) entrapping the accessory gland secretions and ejaculated spermatozoa. This chain is Semenogelin-2 (SEMG2), found in Macaca fascicularis (Crab-eating macaque).